A 550-amino-acid polypeptide reads, in one-letter code: Amino acid transporter AVT1C (550 aa).

A compositionally biased stretch (polar residues) spans 1-11; the sequence is MNHVPSDQSFY. Disordered regions lie at residues 1–44 and 128–148; these read MNHV…ENQA and QGLLSPIPSRRGSMRKDEKSS. Residues 20–34 are compositionally biased toward basic and acidic residues; that stretch reads RKDYVEEDGGSHSDS. Transmembrane regions (helical) follow at residues 165-185, 190-210, 237-257, 283-303, 307-327, 342-362, 377-397, 422-442, 462-484, 488-510, and 521-541; these read AVLNGLNVLCGVGILSTPYAA, WLGLMILFVYGLLSFYTGILL, IFVSIVLYLELYACCVEYIIL, LFALLTTLAVLPTVWLRDLSV, ISAGGVIASVLVVLCLFWIGL, LSTLPVAIGLYGYCYSGHAVF, AVLLTCFGICTLMYAGVAVMG, IAVWTTVVNPFTKYALTISPV, IGIRTLLVFSTLLVGLAIPFFGL, LIGSLLTMLVTLILPPACFLSIV, and LCVLIIIVGAISSVIGSYSAL.

It belongs to the amino acid/polyamine transporter 2 family. Amino acid/auxin permease (AAAP) (TC 2.A.18.5) subfamily.

The protein localises to the membrane. This is Amino acid transporter AVT1C from Arabidopsis thaliana (Mouse-ear cress).